Reading from the N-terminus, the 355-residue chain is DNA polymerase IV (355 aa).

Residues 7–188 (IIHIDMDCFY…LPVRKLFGVG (182 aa)) form the UmuC domain. Positions 11 and 106 each coordinate Mg(2+). Residue E107 is part of the active site.

Belongs to the DNA polymerase type-Y family. Monomer. Mg(2+) is required as a cofactor.

It localises to the cytoplasm. The catalysed reaction is DNA(n) + a 2'-deoxyribonucleoside 5'-triphosphate = DNA(n+1) + diphosphate. Poorly processive, error-prone DNA polymerase involved in untargeted mutagenesis. Copies undamaged DNA at stalled replication forks, which arise in vivo from mismatched or misaligned primer ends. These misaligned primers can be extended by PolIV. Exhibits no 3'-5' exonuclease (proofreading) activity. May be involved in translesional synthesis, in conjunction with the beta clamp from PolIII. This is DNA polymerase IV from Legionella pneumophila subsp. pneumophila (strain Philadelphia 1 / ATCC 33152 / DSM 7513).